Reading from the N-terminus, the 210-residue chain is Na(+)-translocating NADH-quinone reductase subunit D (210 aa).

A run of 5 helical transmembrane segments spans residues 42-62 (FVMT…VSLI), 72-92 (IIVQ…ILKA), 103-123 (VFVG…AFAM), 131-151 (FIDG…VGFF), and 178-198 (NGLM…IWAI).

It belongs to the NqrDE/RnfAE family. As to quaternary structure, composed of six subunits; NqrA, NqrB, NqrC, NqrD, NqrE and NqrF.

It is found in the cell inner membrane. The enzyme catalyses a ubiquinone + n Na(+)(in) + NADH + H(+) = a ubiquinol + n Na(+)(out) + NAD(+). Its function is as follows. NQR complex catalyzes the reduction of ubiquinone-1 to ubiquinol by two successive reactions, coupled with the transport of Na(+) ions from the cytoplasm to the periplasm. NqrA to NqrE are probably involved in the second step, the conversion of ubisemiquinone to ubiquinol. This Vibrio cholerae serotype O1 (strain M66-2) protein is Na(+)-translocating NADH-quinone reductase subunit D.